A 146-amino-acid chain; its full sequence is Transcriptional regulator MraZ (146 aa).

2 consecutive SpoVT-AbrB domains span residues 9 to 55 (TSAL…PRPV) and 81 to 124 (AMDV…DAQR).

This sequence belongs to the MraZ family. Forms oligomers.

It localises to the cytoplasm. The protein localises to the nucleoid. This chain is Transcriptional regulator MraZ, found in Leptothrix cholodnii (strain ATCC 51168 / LMG 8142 / SP-6) (Leptothrix discophora (strain SP-6)).